A 322-amino-acid polypeptide reads, in one-letter code: Malate dehydrogenase (322 aa).

NAD(+)-binding positions include 10–15 (GSGQIG) and D34. Residues R83 and R89 each coordinate substrate. Residues N96 and 119 to 121 (ITN) each bind NAD(+). Substrate contacts are provided by N121 and R152. H176 (proton acceptor) is an active-site residue.

It belongs to the LDH/MDH superfamily. MDH type 3 family.

The enzyme catalyses (S)-malate + NAD(+) = oxaloacetate + NADH + H(+). Its function is as follows. Catalyzes the reversible oxidation of malate to oxaloacetate. The polypeptide is Malate dehydrogenase (Bradyrhizobium sp. (strain ORS 278)).